Reading from the N-terminus, the 251-residue chain is MGRGRVELKRIENKINRQVTFAKRRNGLLKKAYELSVLCDAEVALIIFSNRGKLYEFCSSSSMLRTLERYQKCNYGAPEPNVPSREALAVELSSQQEYLKLKERYDALQRTQRNLLGEDLGPLSTKELESLERQLDSSLKQIRALRTQFMLDQLNDLQSKERMLTETNKTLRLRLADGYQMPLQLNPNQEEVDHYGRHHHQQQQHSQAFFQPLECEPILQIGYQGQQDGMGAGPSVNNYMLGWLPYDTNSI.

Residues 3–57 (RGRVELKRIENKINRQVTFAKRRNGLLKKAYELSVLCDAEVALIIFSNRGKLYEF) form the MADS-box domain. One can recognise a K-box domain in the interval 91-181 (ELSSQQEYLK…RLRLADGYQM (91 aa)). Positions 94–177 (SQQEYLKLKE…NKTLRLRLAD (84 aa)) form a coiled coil.

As to quaternary structure, forms homodimers. Heterodimer with AP1 or AG capable of binding to CArG-box sequences. Binds AP3/PI to form a ternary complex. Interacts with AGL16. Interacts with TT16/AGL32.

The protein localises to the nucleus. Its function is as follows. Probable transcription factor active in inflorescence development and floral organogenesis. Functions with SEPALLATA1/AGL2 and SEPALLATA2/AGL4 to ensure proper development of petals, stamens and carpels and to prevent the indeterminate growth of the flower meristem. Interacts with APETALA1, AGAMOUS or APETALA3/PISTILLATA to form complexes, that could be involved in genes regulation during floral meristem development. Binds specifically to the CArG box DNA sequence 5'-CC (A/T)6 GG-3'. The chain is Developmental protein SEPALLATA 3 (SEP3) from Arabidopsis thaliana (Mouse-ear cress).